A 71-amino-acid chain; its full sequence is Large ribosomal subunit protein uL29 (71 aa).

The tract at residues 1 to 20 is disordered; it reads MKARELQELRQGSSPQDLQE.

Belongs to the universal ribosomal protein uL29 family.

This is Large ribosomal subunit protein uL29 from Clostridium kluyveri (strain ATCC 8527 / DSM 555 / NBRC 12016 / NCIMB 10680 / K1).